The chain runs to 248 residues: Cobalt transport protein CbiM (248 aa).

An N-terminal signal peptide occupies residues M1–A31. 6 consecutive transmembrane segments (helical) span residues L39 to L59, V75 to V95, L107 to F127, T139 to W159, L173 to V195, and I213 to Y233.

The protein belongs to the CbiM family. As to quaternary structure, forms an energy-coupling factor (ECF) transporter complex composed of an ATP-binding protein (A component, CbiO), a transmembrane protein (T component, CbiQ) and 2 possible substrate-capture proteins (S components, CbiM and CbiN) of unknown stoichimetry.

The protein localises to the cell membrane. It participates in cofactor biosynthesis; adenosylcobalamin biosynthesis. Part of the energy-coupling factor (ECF) transporter complex CbiMNOQ involved in cobalt import. This chain is Cobalt transport protein CbiM, found in Limosilactobacillus reuteri (strain DSM 20016) (Lactobacillus reuteri).